Consider the following 383-residue polypeptide: Opsin Rh4 (383 aa).

Over 1-57 the chain is Extracellular; that stretch reads MDIAGSLCNASEGPVLRPEARVSGNGDLQFLGWNVPPDQIQHIPEHWLTQLEPPASM. N-linked (GlcNAc...) asparagine glycosylation occurs at asparagine 9. A helical membrane pass occupies residues 58–82; that stretch reads HYMLGVFYIFLFCASTVGNGMVIWI. At 83–94 the chain is on the cytoplasmic side; sequence FSTSKALRTPSN. Residues 95–117 traverse the membrane as a helical segment; the sequence is MFVLNLAVFDFIMCLKAPIFIYN. Residues 118–133 lie on the Extracellular side of the membrane; the sequence is SFHRGFALGNTGCQIF. Cysteine 130 and cysteine 207 form a disulfide bridge. Residues 134-153 traverse the membrane as a helical segment; it reads AAIGSYSGIGAGMTNAAIGY. Over 154–171 the chain is Cytoplasmic; sequence DRLNVITKPMNRNMTFTK. A helical transmembrane segment spans residues 172 to 196; sequence AIIMNVIIWLYCTPWVVLPLTQFWD. The Extracellular segment spans residues 197-220; it reads RFVPEGYLTSCTFDYLTDNFDTRL. Residues 221-248 form a helical membrane-spanning segment; sequence FVGTIFFFSFVCPTLMIIYYYSQIVGHV. The Cytoplasmic portion of the chain corresponds to 249 to 284; it reads FSHEKALREQAKKMNVESLRSNVDKSKDTAEIRIAK. Residues 285–308 form a helical membrane-spanning segment; that stretch reads AAITICFLFFVSWTPYGVMSLIGA. At 309 to 316 the chain is on the extracellular side; it reads FGDKSLLT. The helical transmembrane segment at 317–341 threads the bilayer; the sequence is PGATMIPACTCKLVACIDPFVYAIS. Lysine 328 is modified (N6-(retinylidene)lysine). The Cytoplasmic portion of the chain corresponds to 342–383; sequence HPRYRMELQKRCPWLAIDEKAPESSSAASTTTTQEQQQTTAA. The tract at residues 361-383 is disordered; that stretch reads KAPESSSAASTTTTQEQQQTTAA. Low complexity predominate over residues 364–383; that stretch reads ESSSAASTTTTQEQQQTTAA.

This sequence belongs to the G-protein coupled receptor 1 family. Opsin subfamily. In terms of processing, phosphorylated on some or all of the serine and threonine residues present in the C-terminal region.

The protein localises to the membrane. Visual pigments are the light-absorbing molecules that mediate vision. They consist of an apoprotein, opsin, covalently linked to cis-retinal. This is Opsin Rh4 (Rh4) from Drosophila virilis (Fruit fly).